The following is a 252-amino-acid chain: Ciliogenesis and planar polarity effector 2 (252 aa).

The interval 46 to 252 is small GTPase-like; sequence QMNVDLVRYK…LRETSSEIIV (207 aa). Residues 62–67 and 173–176 each bind GTP; these read TGVGKS and TKFD.

The protein belongs to the small GTPase superfamily. Rab family.

Its subcellular location is the cytoplasm. It is found in the cytoskeleton. It localises to the cilium basal body. Potential effector of the planar cell polarity signaling pathway. Plays a role in targeted membrane trafficking most probably at the level of vesicle fusion with membranes. Involved in cilium biogenesis by regulating the transport of cargo proteins to the basal body and to the apical tips of cilia. More generally involved in exocytosis in secretory cells. The polypeptide is Ciliogenesis and planar polarity effector 2 (cplane2) (Danio rerio (Zebrafish)).